The sequence spans 1230 residues: Cullin-associated NEDD8-dissociated protein 1 (1230 aa).

The residue at position 2 (alanine 2) is an N-acetylalanine. HEAT repeat units follow at residues 2–39 (ASAS…KDSI), 44–81 (DSER…KVKE), 83–119 (QVET…ELPP), 131–165 (CKKI…LSRQ), 171–208 (NFHP…SCGN), 210–247 (VFVD…QAGH), 248–282 (RIGE…FESF), 289–366 (EVYP…TRHE), 370–407 (EFYK…QTRP), 424–467 (PLTM…VLPG), 471–510 (QHIP…NHSP), and 515–552 (PHVQ…VIRP). An N6-acetyllysine modification is found at lysine 55. The interval 315-344 (DEDEDENAMDADGGDDDDQGSDDEYSDDDD) is disordered. Serine 335 is modified (phosphoserine). At serine 558 the chain carries Phosphoserine. HEAT repeat units follow at residues 563-602 (PYIK…NLGD), 606-643 (PDLS…LKID), 646-683 (PVLG…NYSD), 688-725 (AMID…VYPS), 729-768 (KISG…TGTN), 770-808 (LGYM…ALTR), 809-845 (ACPK…LGEV), 852-889 (SGQL…GNLP), 890-927 (EYLP…GLKP), 928-960 (YVEN…KLTL), 961-998 (IDPE…DHPQ), 1002-1039 (PLLK…NKPS), 1043-1097 (DLLD…DSCL), 1099-1133 (RLDI…LSTL), and 1140-1189 (QRLD…IPEA). Lysine 971 carries the N6-acetyllysine modification.

It belongs to the CAND family. As to quaternary structure, interacts with TBP. Part of a complex that contains CUL1 and RBX1. Interacts with unneddylated cullins: interacts with CUL1, CUL2, CUL3, CUL4A, CUL4B and CUL5. Does not bind neddylated CUL1. Interaction with cullins is abolished in presence of COMMD1, which antagonizes with CAND1 for interacting with cullins. Interacts with ERCC6. Interacts with DCUN1D1, DCUN1D2, DCUN1D3, DCUN1D4 and DCUN1D5; these interactions are bridged by cullins and strongly inhibits the neddylation of cullins. In terms of tissue distribution, detected in heart, brain, spleen, liver, skeletal muscle, kidney and testis.

It is found in the cytoplasm. The protein localises to the nucleus. Functionally, key assembly factor of SCF (SKP1-CUL1-F-box protein) E3 ubiquitin ligase complexes that promotes the exchange of the substrate-recognition F-box subunit in SCF complexes, thereby playing a key role in the cellular repertoire of SCF complexes. Acts as a F-box protein exchange factor. The exchange activity of CAND1 is coupled with cycles of neddylation conjugation: in the deneddylated state, cullin-binding CAND1 binds CUL1-RBX1, increasing dissociation of the SCF complex and promoting exchange of the F-box protein. Probably plays a similar role in other cullin-RING E3 ubiquitin ligase complexes. May indirectly enhance transcription from various types of promoters. The chain is Cullin-associated NEDD8-dissociated protein 1 (Cand1) from Rattus norvegicus (Rat).